Consider the following 391-residue polypeptide: Elongation factor Tu (391 aa).

Residues 10–201 form the tr-type G domain; the sequence is KPHVNIGTIG…EVDNYIPTPE (192 aa). The interval 19–26 is G1; it reads GHVDHGKT. 19–26 provides a ligand contact to GTP; that stretch reads GHVDHGKT. Residue Thr-26 coordinates Mg(2+). The G2 stretch occupies residues 55–59; sequence GITIS. Residues 76–79 are G3; the sequence is DCPG. GTP contacts are provided by residues 76–80 and 131–134; these read DCPGH and NKVD. Residues 131–134 form a G4 region; the sequence is NKVD. The tract at residues 169 to 171 is G5; it reads SAL.

Belongs to the TRAFAC class translation factor GTPase superfamily. Classic translation factor GTPase family. EF-Tu/EF-1A subfamily. As to quaternary structure, monomer.

It localises to the cytoplasm. The catalysed reaction is GTP + H2O = GDP + phosphate + H(+). GTP hydrolase that promotes the GTP-dependent binding of aminoacyl-tRNA to the A-site of ribosomes during protein biosynthesis. The chain is Elongation factor Tu from Bartonella henselae (strain ATCC 49882 / DSM 28221 / CCUG 30454 / Houston 1) (Rochalimaea henselae).